Consider the following 237-residue polypeptide: 2,3,4,5-tetrahydropyridine-2,6-dicarboxylate N-acetyltransferase (237 aa).

The protein belongs to the transferase hexapeptide repeat family. DapH subfamily.

It catalyses the reaction (S)-2,3,4,5-tetrahydrodipicolinate + acetyl-CoA + H2O = L-2-acetamido-6-oxoheptanedioate + CoA. Its pathway is amino-acid biosynthesis; L-lysine biosynthesis via DAP pathway; LL-2,6-diaminopimelate from (S)-tetrahydrodipicolinate (acetylase route): step 1/3. In terms of biological role, catalyzes the transfer of an acetyl group from acetyl-CoA to tetrahydrodipicolinate. This is 2,3,4,5-tetrahydropyridine-2,6-dicarboxylate N-acetyltransferase from Alkaliphilus metalliredigens (strain QYMF).